Consider the following 279-residue polypeptide: Large ribosomal subunit protein uL2 (279 aa).

Composition is skewed to basic residues over residues 211 to 221 (GRSRWRGKTPH) and 256 to 279 (SYGK…RKGK). Residues 211–279 (GRSRWRGKTP…KFIVRGRKGK (69 aa)) form a disordered region.

The protein belongs to the universal ribosomal protein uL2 family. In terms of assembly, part of the 50S ribosomal subunit. Forms a bridge to the 30S subunit in the 70S ribosome.

Its function is as follows. One of the primary rRNA binding proteins. Required for association of the 30S and 50S subunits to form the 70S ribosome, for tRNA binding and peptide bond formation. It has been suggested to have peptidyltransferase activity; this is somewhat controversial. Makes several contacts with the 16S rRNA in the 70S ribosome. The polypeptide is Large ribosomal subunit protein uL2 (Oenococcus oeni (strain ATCC BAA-331 / PSU-1)).